A 138-amino-acid polypeptide reads, in one-letter code: Basic phospholipase A2 PL-Y (138 aa).

An N-terminal signal peptide occupies residues 1–16; sequence MRTLWIMAVLLVGVEG. Intrachain disulfides connect Cys-42–Cys-131, Cys-44–Cys-60, Cys-59–Cys-111, Cys-65–Cys-138, Cys-66–Cys-104, Cys-73–Cys-97, and Cys-91–Cys-102. Residues Tyr-43, Gly-45, and Gly-47 each contribute to the Ca(2+) site. His-63 is a catalytic residue. Asp-64 lines the Ca(2+) pocket. Residue Asp-105 is part of the active site.

This sequence belongs to the phospholipase A2 family. Group II subfamily. D49 sub-subfamily. Requires Ca(2+) as cofactor. In terms of tissue distribution, expressed by the venom gland.

The protein resides in the secreted. It carries out the reaction a 1,2-diacyl-sn-glycero-3-phosphocholine + H2O = a 1-acyl-sn-glycero-3-phosphocholine + a fatty acid + H(+). Functionally, snake venom phospholipase A2 (PLA2) that can cleave arachidonate at the sn-2 position from phospholipides in the micellar state or in bilayer membranes. PLA2 catalyzes the calcium-dependent hydrolysis of the 2-acyl groups in 3-sn-phosphoglycerides. In Protobothrops flavoviridis (Habu), this protein is Basic phospholipase A2 PL-Y.